A 368-amino-acid polypeptide reads, in one-letter code: 3-isopropylmalate dehydrogenase (368 aa).

79–91 (GPEWGTSSTVRPE) provides a ligand contact to NAD(+). Residues Arg98, Arg108, Arg137, and Asp226 each contribute to the substrate site. Mg(2+)-binding residues include Asp226, Asp251, and Asp255. Residue 291-303 (GSAPDISGKGIVN) participates in NAD(+) binding.

The protein belongs to the isocitrate and isopropylmalate dehydrogenases family. In terms of assembly, homodimer. Mg(2+) serves as cofactor. The cofactor is Mn(2+).

The protein resides in the cytoplasm. The catalysed reaction is (2R,3S)-3-isopropylmalate + NAD(+) = 4-methyl-2-oxopentanoate + CO2 + NADH. It participates in amino-acid biosynthesis; L-leucine biosynthesis; L-leucine from 3-methyl-2-oxobutanoate: step 3/4. Its function is as follows. Catalyzes the oxidation of 3-carboxy-2-hydroxy-4-methylpentanoate (3-isopropylmalate) to 3-carboxy-4-methyl-2-oxopentanoate. The product decarboxylates to 4-methyl-2 oxopentanoate. This Neurospora crassa (strain ATCC 24698 / 74-OR23-1A / CBS 708.71 / DSM 1257 / FGSC 987) protein is 3-isopropylmalate dehydrogenase (leu-1).